The sequence spans 257 residues: Snake venom serine protease KN2 (257 aa).

The N-terminal stretch at 1-18 (MVLIRVLANLLILQLSYA) is a signal peptide. A propeptide spanning residues 19–24 (QKSSEL) is cleaved from the precursor. One can recognise a Peptidase S1 domain in the interval 25-248 (VIGGHPCNIN…HLDWIKSIIA (224 aa)). Intrachain disulfides connect C31–C162, C49–C65, C97–C255, C141–C209, C173–C188, and C199–C224. Active-site charge relay system residues include H64 and D109. N-linked (GlcNAc...) asparagine glycans are attached at residues N120 and N121. S203 serves as the catalytic Charge relay system.

It belongs to the peptidase S1 family. Snake venom subfamily. Monomer. In terms of tissue distribution, expressed by the venom gland.

The protein resides in the secreted. Functionally, snake venom serine protease that may act in the hemostasis system of the prey. This is Snake venom serine protease KN2 from Trimeresurus stejnegeri (Chinese green tree viper).